The following is a 397-amino-acid chain: Arginine biosynthesis bifunctional protein ArgJ (397 aa).

Thr-147, Lys-173, Thr-184, Glu-270, Asn-392, and Thr-397 together coordinate substrate. Catalysis depends on Thr-184, which acts as the Nucleophile.

This sequence belongs to the ArgJ family. As to quaternary structure, heterotetramer of two alpha and two beta chains.

It localises to the cytoplasm. It carries out the reaction N(2)-acetyl-L-ornithine + L-glutamate = N-acetyl-L-glutamate + L-ornithine. The enzyme catalyses L-glutamate + acetyl-CoA = N-acetyl-L-glutamate + CoA + H(+). It participates in amino-acid biosynthesis; L-arginine biosynthesis; L-ornithine and N-acetyl-L-glutamate from L-glutamate and N(2)-acetyl-L-ornithine (cyclic): step 1/1. Its pathway is amino-acid biosynthesis; L-arginine biosynthesis; N(2)-acetyl-L-ornithine from L-glutamate: step 1/4. Functionally, catalyzes two activities which are involved in the cyclic version of arginine biosynthesis: the synthesis of N-acetylglutamate from glutamate and acetyl-CoA as the acetyl donor, and of ornithine by transacetylation between N(2)-acetylornithine and glutamate. The chain is Arginine biosynthesis bifunctional protein ArgJ from Streptococcus thermophilus (strain CNRZ 1066).